A 228-amino-acid chain; its full sequence is Putative adhesin RBE_1271 (228 aa).

The first 22 residues, Met-1 to Ala-22, serve as a signal peptide directing secretion.

The chain is Putative adhesin RBE_1271 from Rickettsia bellii (strain RML369-C).